The following is a 255-amino-acid chain: MLLVIDVGNTNIVLGIYDGERLVRDWRVSTDKARTTDEYGILINELFRLAGLGLDQIRAVIISSVVPPLTGVLERLSLGYFGMRPLVVGPGIKTGMPIQYDNPREVGADRIVNAVAGYEKYRTSLIIVDFGTATTFDYVNRKGEYCGGAIAPGLVISTEALFQRASKLPRVDIIRPSAIIARNTVNSMQAGIYYGYVGLVDEIVTRMKAESKDAPRVIATGGLASLIAPESKTIEAVEEYLTLEGLRILYERNRE.

6–13 (DVGNTNIV) contacts ATP. Residues Tyr100 and 107–110 (GADR) contribute to the substrate site. Asp109 acts as the Proton acceptor in catalysis. Asp129 contacts K(+). Position 132 (Thr132) interacts with ATP. Thr184 lines the substrate pocket.

This sequence belongs to the type III pantothenate kinase family. As to quaternary structure, homodimer. NH4(+) is required as a cofactor. Requires K(+) as cofactor.

It is found in the cytoplasm. It catalyses the reaction (R)-pantothenate + ATP = (R)-4'-phosphopantothenate + ADP + H(+). Its pathway is cofactor biosynthesis; coenzyme A biosynthesis; CoA from (R)-pantothenate: step 1/5. Catalyzes the phosphorylation of pantothenate (Pan), the first step in CoA biosynthesis. The sequence is that of Type III pantothenate kinase from Geobacter sulfurreducens (strain ATCC 51573 / DSM 12127 / PCA).